Consider the following 312-residue polypeptide: Ribosomal RNA small subunit methyltransferase H (312 aa).

S-adenosyl-L-methionine is bound by residues 33 to 35, Asp-51, Phe-78, Asp-97, and Gln-104; that span reads GGY.

Belongs to the methyltransferase superfamily. RsmH family.

The protein resides in the cytoplasm. The catalysed reaction is cytidine(1402) in 16S rRNA + S-adenosyl-L-methionine = N(4)-methylcytidine(1402) in 16S rRNA + S-adenosyl-L-homocysteine + H(+). Specifically methylates the N4 position of cytidine in position 1402 (C1402) of 16S rRNA. This Orientia tsutsugamushi (strain Boryong) (Rickettsia tsutsugamushi) protein is Ribosomal RNA small subunit methyltransferase H.